We begin with the raw amino-acid sequence, 668 residues long: Fructose-1,6-bisphosphatase class 3 (668 aa).

The protein belongs to the FBPase class 3 family. It depends on Mn(2+) as a cofactor.

It carries out the reaction beta-D-fructose 1,6-bisphosphate + H2O = beta-D-fructose 6-phosphate + phosphate. It functions in the pathway carbohydrate biosynthesis; gluconeogenesis. This Clostridium botulinum (strain Langeland / NCTC 10281 / Type F) protein is Fructose-1,6-bisphosphatase class 3.